We begin with the raw amino-acid sequence, 836 residues long: Protein O-mannosyl-transferase TMTC2 (836 aa).

Residues 1-21 (MIAELVSSALGLALYLNTLSA) form a helical membrane-spanning segment. The Extracellular segment spans residues 22 to 84 (DFCYDDSRAI…LNHAIGGLNP (63 aa)). Residues 85–105 (WSYHLVNVLLHAAVTGLFTSF) traverse the membrane as a helical segment. The Cytoplasmic segment spans residues 106–107 (SK). Residues 108–128 (ILLGDGYWTFMAGLMFASHPI) traverse the membrane as a helical segment. Residues 129–132 (HTEA) are Extracellular-facing. A helical membrane pass occupies residues 133–153 (VAGIVGRADVGASLFFLLSLL). The Cytoplasmic portion of the chain corresponds to 154–162 (CYIKHCSTR). The next 2 helical transmembrane spans lie at 163–184 (GYSA…CSML) and 185–204 (WKEQ…VFVF). Residues 205 to 220 (HRLKIKQILPTIYKRK) are Cytoplasmic-facing. The chain crosses the membrane as a helical span at residues 221 to 241 (NLSLFLSISLLIFWGSSLLGA). Topologically, residues 242–312 (RLYWMGNKPP…KTVCDWRNLH (71 aa)) are extracellular. The chain crosses the membrane as a helical span at residues 313-333 (TVAFYTGLLLLAYYGLKSPSV). Over 334–399 (DRECNGKTVT…TENIVVLSLS (66 aa)) the chain is Cytoplasmic. Residues 400 to 420 (LLIIPFVPATNLFFYVGFVIA) form a helical membrane-spanning segment. Residues 421-422 (ER) are Extracellular-facing. Residues 423–443 (VLYIPSMGFCLLITVGARALY) form a helical membrane-spanning segment. The Cytoplasmic portion of the chain corresponds to 444 to 449 (VKVQKR). A helical transmembrane segment spans residues 450-470 (FLKSLIFYATATLIVFYGLKT). Residues 471–836 (AIRNGDWQNE…EKQGLKTSKT (366 aa)) are Extracellular-facing. TPR repeat units lie at residues 493-526 (AKAW…RSNM), 527-560 (ADML…RPTL), 561-594 (ASAY…PDEN), 606-639 (TSCL…MPRQ), 643-676 (QSLY…KTDH), 677-710 (IPAH…DPTK), 711-744 (GNCY…DSTE), 745-778 (FDVV…RPNY), and 779-812 (PAAL…KPDD).

It belongs to the TMTC family.

It is found in the membrane. The protein localises to the endoplasmic reticulum. The enzyme catalyses a di-trans,poly-cis-dolichyl beta-D-mannosyl phosphate + L-seryl-[protein] = 3-O-(alpha-D-mannosyl)-L-seryl-[protein] + a di-trans,poly-cis-dolichyl phosphate + H(+). The catalysed reaction is a di-trans,poly-cis-dolichyl beta-D-mannosyl phosphate + L-threonyl-[protein] = 3-O-(alpha-D-mannosyl)-L-threonyl-[protein] + a di-trans,poly-cis-dolichyl phosphate + H(+). It participates in protein modification; protein glycosylation. Transfers mannosyl residues to the hydroxyl group of serine or threonine residues. The 4 members of the TMTC family are O-mannosyl-transferases dedicated primarily to the cadherin superfamily, each member seems to have a distinct role in decorating the cadherin domains with O-linked mannose glycans at specific regions. Also acts as O-mannosyl-transferase on other proteins such as PDIA3. This Homo sapiens (Human) protein is Protein O-mannosyl-transferase TMTC2.